The sequence spans 408 residues: Inhibin beta B chain (408 aa).

An N-terminal signal peptide occupies residues 1-28 (MDGLPGRALGAACLLMLAVGSLGPGVWG). Positions 29–60 (SPTPPPLPAAPQPPPPPPGAPGGSQDTCTSCG) are disordered. Positions 29–293 (SPTPPPLPAA…GDSRHRIRKR (265 aa)) are excised as a propeptide. The span at 30–48 (PTPPPLPAAPQPPPPPPGA) shows a compositional bias: pro residues. Asn-94 carries an N-linked (GlcNAc...) asparagine glycan. Cystine bridges form between Cys-297–Cys-305, Cys-304–Cys-373, Cys-333–Cys-405, and Cys-337–Cys-407.

It belongs to the TGF-beta family. Dimeric, linked by one or more disulfide bonds. Inhibin B is a dimer of alpha and beta-B. Activin B is a homodimer of beta-B. Activin AB is a dimer of beta-A and beta-B. Interacts with FST and FSTL3.

It localises to the secreted. Its function is as follows. Inhibins and activins inhibit and activate, respectively, the secretion of follitropin by the pituitary gland. Inhibins/activins are involved in regulating a number of diverse functions such as hypothalamic and pituitary hormone secretion, gonadal hormone secretion, germ cell development and maturation, erythroid differentiation, insulin secretion, nerve cell survival, embryonic axial development or bone growth, depending on their subunit composition. Inhibins appear to oppose the functions of activins. Functionally, activin B is a dimer of alpha and beta-B that plays a role in several essential biological processes including embryonic development, stem cell maintenance and differentiation, haematopoiesis, cell proliferation and wound healing. Signals through type I receptor ACVR1C, abundantly expressed in pancreatic beta cells, and type II receptors like ACVR2A. Upon ligand binding, these receptors phosphorylate intracellular signaling mediators SMAD2 and SMAD3, which form a complex with SMAD4, translocate to the nucleus, and regulate gene expression. Plays a crucial role in the induction of hepcidin by inflammation through activation of ACVR1C and subsequent phosphorylation of SMAD1/5/8. Regulates adipocyte lipid metabolism by decreasing non-esterified fatty acids and glycerol release and increases intracellular triglyceride content. Stimulates wound healing by promoting cell migration and hair follicle regeneration through the JNK and ERK signaling pathways downstream of RHOA. In terms of biological role, inhibin B is a dimer of alpha and beta-B that plays a crucial role in the regulation of the reproductive system by inhibiting the secretion of follicle-stimulating hormone (FSH) from the anterior pituitary gland. Thereby, maintains reproductive homeostasis in both males and females. Acts as a more potent suppressor of FSH release than inhibin A. Functions as competitive receptor antagonist binding activin type II receptors with high affinity in the presence of the TGF-beta type III coreceptor/TGFBR3L. The protein is Inhibin beta B chain (INHBB) of Bos taurus (Bovine).